A 153-amino-acid chain; its full sequence is NAD(P)H-quinone oxidoreductase subunit N (153 aa).

The protein belongs to the complex I NdhN subunit family. In terms of assembly, NDH-1 can be composed of about 15 different subunits; different subcomplexes with different compositions have been identified which probably have different functions.

It localises to the cellular thylakoid membrane. It carries out the reaction a plastoquinone + NADH + (n+1) H(+)(in) = a plastoquinol + NAD(+) + n H(+)(out). It catalyses the reaction a plastoquinone + NADPH + (n+1) H(+)(in) = a plastoquinol + NADP(+) + n H(+)(out). NDH-1 shuttles electrons from an unknown electron donor, via FMN and iron-sulfur (Fe-S) centers, to quinones in the respiratory and/or the photosynthetic chain. The immediate electron acceptor for the enzyme in this species is believed to be plastoquinone. Couples the redox reaction to proton translocation, and thus conserves the redox energy in a proton gradient. Cyanobacterial NDH-1 also plays a role in inorganic carbon-concentration. This Prochlorococcus marinus (strain MIT 9211) protein is NAD(P)H-quinone oxidoreductase subunit N.